A 192-amino-acid polypeptide reads, in one-letter code: Erythropoietin (192 aa).

Residues 1–26 form the signal peptide; sequence MGVPDCLALPLLVTFLLLSLGLPVLG. C33 and C187 are oxidised to a cystine. Residues N50, N64, and N109 are each glycosylated (N-linked (GlcNAc...) asparagine).

This sequence belongs to the EPO/TPO family.

It localises to the secreted. Functionally, hormone involved in the regulation of erythrocyte proliferation and differentiation and the maintenance of a physiological level of circulating erythrocyte mass. Binds to EPOR leading to EPOR dimerization and JAK2 activation thereby activating specific downstream effectors, including STAT1 and STAT3. This is Erythropoietin (EPO) from Spalax golani (Golan Heights blind mole rat).